The primary structure comprises 219 residues: uncharacterized protein (219 aa).

This is an uncharacterized protein from Methanocaldococcus jannaschii (strain ATCC 43067 / DSM 2661 / JAL-1 / JCM 10045 / NBRC 100440) (Methanococcus jannaschii).